The following is a 493-amino-acid chain: Calcium-binding tyrosine phosphorylation-regulated protein (493 aa).

The region spanning 12–49 (YGLKTLLEGISRAVLKTNPSNINQFAAAYFQELTMYRG) is the RIIa domain. 4 disordered regions span residues 85–164 (EPGK…VSPE), 244–271 (DLGS…QEPP), 330–354 (NEQS…TTSG), and 426–493 (IVSD…STAE). A compositionally biased stretch (polar residues) spans 90-100 (SVESKVPTQME). Over residues 101 to 117 (KSTDTDEDNVTRTEYSD) the composition is skewed to basic and acidic residues. Low complexity predominate over residues 141-152 (SSKPATPKTTTP). T151 is modified (phosphothreonine). At S155 the chain carries Phosphoserine. 2 stretches are compositionally biased toward polar residues: residues 426–442 (IVSD…NSVP) and 461–470 (SGTSVKSSSG). Positions 484-493 (IEPEGESTAE) are enriched in acidic residues.

In terms of assembly, interacts with FSCB. Isoform 3 self-associates. Isoform 3 and isoform 5 interact with GSK3B. Isoform 1 does not interact with GSK3B. In terms of processing, isoform 1 is phosphorylated on tyrosine residues during in vitro capacitation. Isoform 3 and isoform 5 are phosphorylated by GSK3B in vitro. Dephosphorylation affects its ability to bind calcium. In terms of tissue distribution, expressed in elongating spermatids and spermatozoa (at protein level). Isoform 1 is expressed in testis. Isoform 3 and isoform 5 are also expressed in brain, pancreas and numerous brain tumors.

It is found in the cytoplasm. It localises to the cytoskeleton. The protein localises to the cell projection. The protein resides in the cilium. Its subcellular location is the flagellum. It is found in the nucleus. May function as a regulator of both motility- and head-associated functions such as capacitation and the acrosome reaction. Isoform 1 binds calcium in vitro. Isoform 2 and isoform 6 probably bind calcium. Isoform 3 and isoform 5 do not bind calcium in vitro. Isoform 4 probably does not bind calcium. This chain is Calcium-binding tyrosine phosphorylation-regulated protein (CABYR), found in Homo sapiens (Human).